Here is a 96-residue protein sequence, read N- to C-terminus: Aspartyl/glutamyl-tRNA(Asn/Gln) amidotransferase subunit C (96 aa).

The protein belongs to the GatC family. In terms of assembly, heterotrimer of A, B and C subunits.

It catalyses the reaction L-glutamyl-tRNA(Gln) + L-glutamine + ATP + H2O = L-glutaminyl-tRNA(Gln) + L-glutamate + ADP + phosphate + H(+). The enzyme catalyses L-aspartyl-tRNA(Asn) + L-glutamine + ATP + H2O = L-asparaginyl-tRNA(Asn) + L-glutamate + ADP + phosphate + 2 H(+). Functionally, allows the formation of correctly charged Asn-tRNA(Asn) or Gln-tRNA(Gln) through the transamidation of misacylated Asp-tRNA(Asn) or Glu-tRNA(Gln) in organisms which lack either or both of asparaginyl-tRNA or glutaminyl-tRNA synthetases. The reaction takes place in the presence of glutamine and ATP through an activated phospho-Asp-tRNA(Asn) or phospho-Glu-tRNA(Gln). The polypeptide is Aspartyl/glutamyl-tRNA(Asn/Gln) amidotransferase subunit C (Geobacillus kaustophilus (strain HTA426)).